Here is a 176-residue protein sequence, read N- to C-terminus: MKFLFDLFPIILFFVAFKIWGIFTATAVAIVATLVQIAWVAFRHRKVDPMLWVSLGVVTVFGGATLVLHNDTFIKWKPTVLYWAFSVALIVSQLAFNKNLIEAMMGKQITLPHAIWGKLSVVWAIFFVLLGLVNLFVAYNYTTDQWVNFKLFGATGCLVVFIVGQSLWLSKYMKEE.

5 helical membrane passes run 24 to 44 (TATA…AFRH), 49 to 69 (PMLW…LVLH), 76 to 96 (WKPT…QLAF), 119 to 139 (LSVV…FVAY), and 149 to 169 (FKLF…SLWL).

Belongs to the YciB family.

It is found in the cell inner membrane. Plays a role in cell envelope biogenesis, maintenance of cell envelope integrity and membrane homeostasis. This Paraburkholderia phytofirmans (strain DSM 17436 / LMG 22146 / PsJN) (Burkholderia phytofirmans) protein is Inner membrane-spanning protein YciB.